The primary structure comprises 480 residues: MVDTVDKLGYFQAITGLEDADLCTEILQAHGWDLELAISSFTSSDQDASSSAVDGGGNNRDHDHNNATVTPDYPPRGIVDDTELVMRDDGGGNRGPGVAWRIITLPISIVSGSLGLVSGAIGLGIWAAGGVLSYSLGMLGFRSGRGGGSESARLVSVSSAVGEAMEFVALFDRDYGSNNAFKIDFVVEGFMDALQRSRSSFKLLFVYLHSPDHPDTPVFCGGTLCNEAVVAFVNENFVSWGGSIRSSEGFKMSNSLKASRFPFCAVVMPAANQRIALLQQVEGPKSPEEMLAILQRIVEDSSPTLVTARVEAEERRTNLRLREEQDAAYRAALEADQAREQQRQEEKERLEREAAEAERKLKEEEEARERAAREAEERQAARVRMRQEKALALGEEPEKGPDVTQVLVRFPNGERKGRMFKSETKIQTLYDYVDSLGLLDTEEYSLITNFPRTVYGRDKESMSLKDAGLHPQASLFIEIN.

2 disordered regions span residues 47-78 (DASS…PRGI) and 335-383 (ADQA…AARV). Positions 330 to 389 (RAALEADQAREQQRQEEKERLEREAAEAERKLKEEEEARERAAREAEERQAARVRMRQEK) form a coiled coil. Residues 336 to 383 (DQAREQQRQEEKERLEREAAEAERKLKEEEEARERAAREAEERQAARV) are compositionally biased toward basic and acidic residues. A UBX domain is found at 399-477 (KGPDVTQVLV…GLHPQASLFI (79 aa)).

The chain is Plant UBX domain-containing protein 10 from Arabidopsis thaliana (Mouse-ear cress).